Reading from the N-terminus, the 414-residue chain is Putative F-box/kelch-repeat protein At1g20940 (414 aa).

The 53-residue stretch at Ser13–Pro65 folds into the F-box domain. 2 Kelch repeats span residues Leu281–Gly328 and Leu331–Pro378.

Interacts with DEK3.

It participates in protein modification; protein ubiquitination. Its function is as follows. Probable component of an E3 ubiquitin ligase complex. The sequence is that of Putative F-box/kelch-repeat protein At1g20940 from Arabidopsis thaliana (Mouse-ear cress).